The sequence spans 241 residues: Probable porphobilinogen deaminase (241 aa).

Belongs to the HMBS family.

It carries out the reaction 4 porphobilinogen + H2O = hydroxymethylbilane + 4 NH4(+). Its pathway is porphyrin-containing compound metabolism; protoporphyrin-IX biosynthesis; coproporphyrinogen-III from 5-aminolevulinate: step 2/4. Tetrapolymerization of the monopyrrole PBG into the hydroxymethylbilane pre-uroporphyrinogen in several discrete steps. This chain is Probable porphobilinogen deaminase (hemC), found in Chlamydia trachomatis serovar D (strain ATCC VR-885 / DSM 19411 / UW-3/Cx).